A 276-amino-acid chain; its full sequence is Dermonecrotic toxin LsaSicTox-alphaIB2iii (276 aa).

Residue His5 is part of the active site. The Mg(2+) site is built by Glu25 and Asp27. Residue His41 is the Nucleophile of the active site. Intrachain disulfides connect Cys45-Cys51 and Cys47-Cys190. Asp85 lines the Mg(2+) pocket. Asn129 and Asn253 each carry an N-linked (GlcNAc...) asparagine glycan.

Belongs to the arthropod phospholipase D family. Class II subfamily. The cofactor is Mg(2+). Expressed by the venom gland.

Its subcellular location is the secreted. It carries out the reaction an N-(acyl)-sphingosylphosphocholine = an N-(acyl)-sphingosyl-1,3-cyclic phosphate + choline. It catalyses the reaction an N-(acyl)-sphingosylphosphoethanolamine = an N-(acyl)-sphingosyl-1,3-cyclic phosphate + ethanolamine. The catalysed reaction is a 1-acyl-sn-glycero-3-phosphocholine = a 1-acyl-sn-glycero-2,3-cyclic phosphate + choline. The enzyme catalyses a 1-acyl-sn-glycero-3-phosphoethanolamine = a 1-acyl-sn-glycero-2,3-cyclic phosphate + ethanolamine. Dermonecrotic toxins cleave the phosphodiester linkage between the phosphate and headgroup of certain phospholipids (sphingolipid and lysolipid substrates), forming an alcohol (often choline) and a cyclic phosphate. This toxin acts on sphingomyelin (SM). It may also act on ceramide phosphoethanolamine (CPE), lysophosphatidylcholine (LPC) and lysophosphatidylethanolamine (LPE), but not on lysophosphatidylserine (LPS), and lysophosphatidylglycerol (LPG). It acts by transphosphatidylation, releasing exclusively cyclic phosphate products as second products. Induces dermonecrosis, hemolysis, increased vascular permeability, edema, inflammatory response, and platelet aggregation. The sequence is that of Dermonecrotic toxin LsaSicTox-alphaIB2iii from Loxosceles sabina (Tucson recluse spider).